The following is an 84-amino-acid chain: Acyl carrier protein (84 aa).

Positions 1-75 (MIFQKIQEFI…DILEYIQQHV (75 aa)) constitute a Carrier domain. Serine 35 is modified (O-(pantetheine 4'-phosphoryl)serine).

It belongs to the acyl carrier protein (ACP) family. In terms of processing, 4'-phosphopantetheine is transferred from CoA to a specific serine of apo-ACP by AcpS. This modification is essential for activity because fatty acids are bound in thioester linkage to the sulfhydryl of the prosthetic group.

The protein resides in the cytoplasm. It participates in lipid metabolism; fatty acid biosynthesis. Its function is as follows. Carrier of the growing fatty acid chain in fatty acid biosynthesis. This Phytoplasma mali (strain AT) protein is Acyl carrier protein.